The sequence spans 282 residues: ATP synthase gamma chain (282 aa).

This sequence belongs to the ATPase gamma chain family. As to quaternary structure, F-type ATPases have 2 components, CF(1) - the catalytic core - and CF(0) - the membrane proton channel. CF(1) has five subunits: alpha(3), beta(3), gamma(1), delta(1), epsilon(1). CF(0) has three main subunits: a, b and c. In this bacterium the a and b subunits are transcribed but do not seem to be translated, thus the ATP synthase consists of the alpha, beta, gamma, delta, epsilon and c subunits.

The protein localises to the cell membrane. Functionally, produces ATP from ADP in the presence of a proton gradient across the membrane. The gamma chain is believed to be important in regulating ATPase activity and the flow of protons through the CF(0) complex. The sequence is that of ATP synthase gamma chain from Moorella thermoacetica (strain ATCC 39073 / JCM 9320).